We begin with the raw amino-acid sequence, 429 residues long: Enolase (429 aa).

Position 163 (glutamine 163) interacts with (2R)-2-phosphoglycerate. The active-site Proton donor is the glutamate 205. Aspartate 242, glutamate 285, and aspartate 312 together coordinate Mg(2+). The (2R)-2-phosphoglycerate site is built by lysine 337, arginine 366, serine 367, and lysine 388. Residue lysine 337 is the Proton acceptor of the active site.

It belongs to the enolase family. It depends on Mg(2+) as a cofactor.

The protein resides in the cytoplasm. It localises to the secreted. It is found in the cell surface. The catalysed reaction is (2R)-2-phosphoglycerate = phosphoenolpyruvate + H2O. The protein operates within carbohydrate degradation; glycolysis; pyruvate from D-glyceraldehyde 3-phosphate: step 4/5. In terms of biological role, catalyzes the reversible conversion of 2-phosphoglycerate (2-PG) into phosphoenolpyruvate (PEP). It is essential for the degradation of carbohydrates via glycolysis. This chain is Enolase, found in Oceanobacillus iheyensis (strain DSM 14371 / CIP 107618 / JCM 11309 / KCTC 3954 / HTE831).